The chain runs to 340 residues: Ketol-acid reductoisomerase (NADP(+)) (340 aa).

Positions 1 to 182 (MRVYYDRDCD…GGGRSGIIET (182 aa)) constitute a KARI N-terminal Rossmann domain. Residues 24–27 (YGSQ), R48, S51, S53, and 83–86 (DELQ) each bind NADP(+). Residue H108 is part of the active site. NADP(+) is bound at residue G134. The 147-residue stretch at 183–329 (NFREECETDL…ETLRGMMPWI (147 aa)) folds into the KARI C-terminal knotted domain. The Mg(2+) site is built by D191, E195, E227, and E231. S252 serves as a coordination point for substrate.

It belongs to the ketol-acid reductoisomerase family. Mg(2+) is required as a cofactor.

It carries out the reaction (2R)-2,3-dihydroxy-3-methylbutanoate + NADP(+) = (2S)-2-acetolactate + NADPH + H(+). The catalysed reaction is (2R,3R)-2,3-dihydroxy-3-methylpentanoate + NADP(+) = (S)-2-ethyl-2-hydroxy-3-oxobutanoate + NADPH + H(+). Its pathway is amino-acid biosynthesis; L-isoleucine biosynthesis; L-isoleucine from 2-oxobutanoate: step 2/4. It participates in amino-acid biosynthesis; L-valine biosynthesis; L-valine from pyruvate: step 2/4. Functionally, involved in the biosynthesis of branched-chain amino acids (BCAA). Catalyzes an alkyl-migration followed by a ketol-acid reduction of (S)-2-acetolactate (S2AL) to yield (R)-2,3-dihydroxy-isovalerate. In the isomerase reaction, S2AL is rearranged via a Mg-dependent methyl migration to produce 3-hydroxy-3-methyl-2-ketobutyrate (HMKB). In the reductase reaction, this 2-ketoacid undergoes a metal-dependent reduction by NADPH to yield (R)-2,3-dihydroxy-isovalerate. This chain is Ketol-acid reductoisomerase (NADP(+)), found in Jannaschia sp. (strain CCS1).